A 420-amino-acid chain; its full sequence is ATP phosphoribosyltransferase regulatory subunit (420 aa).

This sequence belongs to the class-II aminoacyl-tRNA synthetase family. HisZ subfamily. Heteromultimer composed of HisG and HisZ subunits.

The protein localises to the cytoplasm. It functions in the pathway amino-acid biosynthesis; L-histidine biosynthesis; L-histidine from 5-phospho-alpha-D-ribose 1-diphosphate: step 1/9. Required for the first step of histidine biosynthesis. May allow the feedback regulation of ATP phosphoribosyltransferase activity by histidine. In Bacillus cereus (strain ZK / E33L), this protein is ATP phosphoribosyltransferase regulatory subunit.